The following is a 999-amino-acid chain: Signal peptide, CUB and EGF-like domain-containing protein 2 (999 aa).

Positions 1 to 31 (MGVAGRNRPGAAWAVLLLLLLLPPLLLLAGA) are cleaved as a signal peptide. The EGF-like 1; calcium-binding domain occupies 45–85 (DVDECAQGLDDCHADALCQNTPTSYKCSCKPGYQGEGRQCE). 6 disulfide bridges follow: C49–C62, C56–C71, C73–C84, C90–C102, C98–C111, and C113–C126. Positions 86–127 (DIDECGNELNGGCVHDCLNIPGNYRCTCFDGFMLAHDGHNCL) constitute an EGF-like 2; calcium-binding domain. The EGF-like 3; calcium-binding domain maps to 128-168 (DVDECLENNGGCQHTCVNVMGSYECCCKEGFFLSDNQHTCI). 3 EGF-like domains span residues 177–213 (CMNKDHGCSHICKEAPRGSVACECRPGFELAKNQRDC), 217–252 (CNHGNGGCQHSCDDTADGPECSCHPQYKMHTDGRSC), and 286–321 (CAVNNGGCDRTCKDTSTGVHCSCPVGFTLQLDGKTC). Positions 323-363 (DIDECQTRNGGCDHFCKNIVGSFDCGCKKGFKLLTDEKSCQ) constitute an EGF-like 7; calcium-binding domain. In terms of domain architecture, EGF-like 8; calcium-binding spans 364–402 (DVDECSLDRTCDHSCINHPGTFACACNRGYTLYGFTHCG). 6 disulfides stabilise this stretch: C368–C378, C374–C387, C389–C401, C407–C418, C414–C427, and C429–C442. The EGF-like 9; calcium-binding domain maps to 403–443 (DTNECSINNGGCQQVCVNTVGSYECQCHPGYKLHWNKKDCV). N659 is a glycosylation site (N-linked (GlcNAc...) asparagine). C809 and C835 are joined by a disulfide. A CUB domain is found at 809 to 921 (CGGELGDFTG…RGFQVPYVTY (113 aa)). Residues 847-856 (ILIVVPEIFL) form an interaction with the cholesterol-anchor of SHH region. A disulfide bond links C862 and C883.

Forms homooligomers. Forms heterooligomers with SCUBE1. Forms heterooligomers with SCUBE3. Interacts with SHH via the cholesterol anchor of the dually lipid-modified SHH (ShhNp). Interacts with PTCH1. Interacts with VEGFR2. In terms of processing, N-glycosylated. Expressed in a broad spectrum of adult tissues.

The protein resides in the secreted. It localises to the cell surface. In terms of biological role, lipid-binding protein required for SHH long-range signaling by binding to the dually lipid-modified SHH (ShhNp) and by promoting ShhNp mobilization, solubilization and release from the cell membrane. Acts by enhancing the proteolytic processing (shedding) of the lipid-modified N- and C- terminal of ShhNp at the cell surface. Synergizes with DISP1 to increase SHH secretion. Probable cell surface coreceptor for VEGFR2 involved in VEGFR2-mediated angiogenesis. The polypeptide is Signal peptide, CUB and EGF-like domain-containing protein 2 (Homo sapiens (Human)).